A 238-amino-acid polypeptide reads, in one-letter code: Ribonuclease PH (238 aa).

Residues arginine 86 and 124-126 contribute to the phosphate site; that span reads GTR.

Belongs to the RNase PH family. Homohexameric ring arranged as a trimer of dimers.

It catalyses the reaction tRNA(n+1) + phosphate = tRNA(n) + a ribonucleoside 5'-diphosphate. Its function is as follows. Phosphorolytic 3'-5' exoribonuclease that plays an important role in tRNA 3'-end maturation. Removes nucleotide residues following the 3'-CCA terminus of tRNAs; can also add nucleotides to the ends of RNA molecules by using nucleoside diphosphates as substrates, but this may not be physiologically important. Probably plays a role in initiation of 16S rRNA degradation (leading to ribosome degradation) during starvation. This chain is Ribonuclease PH, found in Photobacterium profundum (strain SS9).